We begin with the raw amino-acid sequence, 424 residues long: Hemagglutinin-esterase (424 aa).

A signal peptide spans 1-16 (MFLLPRFILVSCIIGS). Residues 7–127 (FILVSCIIGS…SNDIWMQNKG (121 aa)) are esterase domain 1. The Virion surface segment spans residues 17-392 (LGFYNPPTNV…PICVYDPLPV (376 aa)). Ser-40 acts as the Nucleophile in catalysis. Cys-44 and Cys-65 form a disulfide bridge. 6 N-linked (GlcNAc...) asparagine; by host glycosylation sites follow: Asn-54, Asn-89, Asn-114, Asn-153, Asn-236, and Asn-301. 3 cysteine pairs are disulfide-bonded: Cys-113–Cys-162, Cys-197–Cys-276, and Cys-205–Cys-249. A receptor binding region spans residues 128 to 266 (LFYTQVYKNM…GNYLAISNEL (139 aa)). The interval 267-379 (LLTVPTKAIC…RCPTAADINN (113 aa)) is esterase domain 2. The cysteines at positions 307 and 312 are disulfide-linked. N-linked (GlcNAc...) asparagine; by host glycosylation occurs at Asn-316. Residues Asp-326 and His-329 each act as charge relay system in the active site. Cys-347 and Cys-371 are joined by a disulfide. Asn-358 carries an N-linked (GlcNAc...) asparagine; by host glycan. A helical membrane pass occupies residues 393–413 (ILLGILLGVAVIIIVVLLLYF). Topologically, residues 414-424 (MVDNGTRLHDA) are intravirion. N-linked (GlcNAc...) asparagine; by host glycosylation is present at Asn-417.

This sequence belongs to the influenza type C/coronaviruses hemagglutinin-esterase family. Homodimer; disulfide-linked. Forms a complex with the M protein in the pre-Golgi. Associates then with S-M complex to form a ternary complex S-M-HE. N-glycosylated in the host RER.

It localises to the virion membrane. Its subcellular location is the host cell membrane. It catalyses the reaction N-acetyl-9-O-acetylneuraminate + H2O = N-acetylneuraminate + acetate + H(+). The enzyme catalyses N-acetyl-4-O-acetylneuraminate + H2O = N-acetylneuraminate + acetate + H(+). Functionally, structural protein that makes short spikes at the surface of the virus. Contains receptor binding and receptor-destroying activities. Mediates de-O-acetylation of N-acetyl-4-O-acetylneuraminic acid, which is probably the receptor determinant recognized by the virus on the surface of erythrocytes and susceptible cells. This receptor-destroying activity is important for virus release as it probably helps preventing self-aggregation and ensures the efficient spread of the progeny virus from cell to cell. May serve as a secondary viral attachment protein for initiating infection, the spike protein being the major one. May become a target for both the humoral and the cellular branches of the immune system. This chain is Hemagglutinin-esterase, found in Homo sapiens (Human).